The sequence spans 488 residues: Dihydrolipoyl dehydrogenase, mitochondrial (488 aa).

Residues 1 to 25 constitute a mitochondrion transit peptide; it reads MLRINRISNLRTFGQRFFSTEQQDV. FAD is bound by residues 52-61, lysine 70, glycine 134, and 163-165; these read EKRGKLGGTC and TGS. Cysteine 61 and cysteine 66 are joined by a disulfide. NAD(+) is bound by residues 200–207, glutamate 223, valine 257, and glycine 294; that span reads GGGVIGLE. FAD contacts are provided by residues aspartate 335 and 341–344; that span reads MLAH. Histidine 467 serves as the catalytic Proton acceptor.

The protein belongs to the class-I pyridine nucleotide-disulfide oxidoreductase family. FAD serves as cofactor.

The protein localises to the mitochondrion matrix. The enzyme catalyses N(6)-[(R)-dihydrolipoyl]-L-lysyl-[protein] + NAD(+) = N(6)-[(R)-lipoyl]-L-lysyl-[protein] + NADH + H(+). The chain is Dihydrolipoyl dehydrogenase, mitochondrial (lpd) from Dictyostelium discoideum (Social amoeba).